The chain runs to 251 residues: LexA repressor (251 aa).

Residues 26 to 46 (FDEMKDALGLKSKSGIHRLIK) constitute a DNA-binding region (H-T-H motif). Residues Ser172 and Lys210 each act as for autocatalytic cleavage activity in the active site.

It belongs to the peptidase S24 family. Homodimer.

It carries out the reaction Hydrolysis of Ala-|-Gly bond in repressor LexA.. Its function is as follows. Represses a number of genes involved in the response to DNA damage (SOS response), including recA and lexA. In the presence of single-stranded DNA, RecA interacts with LexA causing an autocatalytic cleavage which disrupts the DNA-binding part of LexA, leading to derepression of the SOS regulon and eventually DNA repair. This is LexA repressor from Rhodospirillum rubrum (strain ATCC 11170 / ATH 1.1.1 / DSM 467 / LMG 4362 / NCIMB 8255 / S1).